The sequence spans 201 residues: 3-isopropylmalate dehydratase small subunit (201 aa).

Belongs to the LeuD family. LeuD type 1 subfamily. As to quaternary structure, heterodimer of LeuC and LeuD.

The catalysed reaction is (2R,3S)-3-isopropylmalate = (2S)-2-isopropylmalate. It functions in the pathway amino-acid biosynthesis; L-leucine biosynthesis; L-leucine from 3-methyl-2-oxobutanoate: step 2/4. Its function is as follows. Catalyzes the isomerization between 2-isopropylmalate and 3-isopropylmalate, via the formation of 2-isopropylmaleate. This chain is 3-isopropylmalate dehydratase small subunit, found in Shewanella putrefaciens (strain CN-32 / ATCC BAA-453).